The chain runs to 913 residues: MFAPLLKKLFGSKNEREVKRMLKTVQIVNAFEEQMVALSDDQLRAKTAEFKARIAKGETLDKLLPEAFAVAREAGKRIMGMRHFDVQLIGGMTLHEGKIAEMRTGEGKTLVATLGVYLNALSGKGVHVVTVNDYLARRDANWMRPLYEFLGLSVGVVTPFQPPEEKRAAYAADITYGTNNEFGFDYLRDNMAFSMEDKFQRELNFAVIDEVDSILIDEARTPLIISGQAEDSSRLYTEINKLIPRLEQHIEEVEGQVTKAGHFTVDEKTRQVELNEAGHQFIEEMLTQVGLLAEGESLYSAHNLGLLTHVYAGLRAHKLFNRNVEYIVQDGQVVLVDEHTGRTMPGRRLSEGLHQAIEAKENLNIQAESQTLASTTFQNYFRLYTKLSGMTGTADTEAFEFHQIYGLQVMVIPPNKPLARKDYNDLVFLTADEKYAAIINDIKECMTQGRPVLVGTATIETSEHMSNLLNKEGIEHKVLNAKFHEKEAEIIAQAGRPGALTIATNMAGRGTDILLGGNWEVEVASLENPTPEQIAQIKADWQKRHQQVLESGGLQVIASERHESRRIDNQLRGRAGRQGDAGSSRFYLSLEDSLMRIFASDRVKNFMKALGMQSGEAIEHRMVTNAIEKAQRKVEGRNFDIRKQLLEFDDVNNEQRKVIYHMRNTLLAADNIGETIADFRQDVLNATVSAHIPPQSLPEQWDVAGLEEAIQSGFGVSLPIQQWLDEDDHLYEETLREKLLNELIAAYNEKEDQAGAEALRTFEKQIVLRVLDDLWKDHLSTMDHLRHGIHLRGYAQKNPKQEYKRESFTLFSELLDSIKRDSIRVLSHVQVRREDPAEEEARLRQEAEALAQRMQFEHAEAPGLDQPEALEEGVEVDVALATAPVRNEQKLGRNELCYCGSGKKYKHCHGQIN.

ATP is bound by residues Gln-87, 105–109, and Asp-512; that span reads GEGKT. Positions 897, 899, 908, and 909 each coordinate Zn(2+).

It belongs to the SecA family. In terms of assembly, monomer and homodimer. Part of the essential Sec protein translocation apparatus which comprises SecA, SecYEG and auxiliary proteins SecDF-YajC and YidC. Requires Zn(2+) as cofactor.

The protein localises to the cell inner membrane. Its subcellular location is the cytoplasm. It catalyses the reaction ATP + H2O + cellular proteinSide 1 = ADP + phosphate + cellular proteinSide 2.. Part of the Sec protein translocase complex. Interacts with the SecYEG preprotein conducting channel. Has a central role in coupling the hydrolysis of ATP to the transfer of proteins into and across the cell membrane, serving both as a receptor for the preprotein-SecB complex and as an ATP-driven molecular motor driving the stepwise translocation of polypeptide chains across the membrane. The chain is Protein translocase subunit SecA from Pseudomonas fluorescens (strain ATCC BAA-477 / NRRL B-23932 / Pf-5).